The primary structure comprises 706 residues: DNA ligase (706 aa).

NAD(+) is bound by residues 40–44, 89–90, and Glu-120; these read DLQYD and SI. The N6-AMP-lysine intermediate role is filled by Lys-122. Residues Arg-143, Glu-190, Lys-306, and Lys-330 each contribute to the NAD(+) site. Residues Cys-424, Cys-427, Cys-442, and Cys-447 each coordinate Zn(2+). Residues 625-706 enclose the BRCT domain; the sequence is EANLPLAGKN…FRLRYETEAT (82 aa).

It belongs to the NAD-dependent DNA ligase family. LigA subfamily. Mg(2+) serves as cofactor. It depends on Mn(2+) as a cofactor.

The catalysed reaction is NAD(+) + (deoxyribonucleotide)n-3'-hydroxyl + 5'-phospho-(deoxyribonucleotide)m = (deoxyribonucleotide)n+m + AMP + beta-nicotinamide D-nucleotide.. Functionally, DNA ligase that catalyzes the formation of phosphodiester linkages between 5'-phosphoryl and 3'-hydroxyl groups in double-stranded DNA using NAD as a coenzyme and as the energy source for the reaction. It is essential for DNA replication and repair of damaged DNA. This chain is DNA ligase, found in Rhodopirellula baltica (strain DSM 10527 / NCIMB 13988 / SH1).